The following is a 132-amino-acid chain: Histone H2B.1 (132 aa).

Low complexity predominate over residues 1–13; sequence MSAKASKAPASKA. Residues 1 to 39 form a disordered region; that stretch reads MSAKASKAPASKAPAEKKPAAKKTSSSTDPSKKRTKARK. N6-acetyllysine; alternate is present on lysine 7. Lysine 7 is covalently cross-linked (Glycyl lysine isopeptide (Lys-Gly) (interchain with G-Cter in SUMO); alternate). At serine 11 the chain carries Phosphoserine. An N6-acetyllysine modification is found at lysine 12. At lysine 17 the chain carries N6-acetyllysine; alternate. A Glycyl lysine isopeptide (Lys-Gly) (interchain with G-Cter in SUMO); alternate cross-link involves residue lysine 17. Residue lysine 18 forms a Glycyl lysine isopeptide (Lys-Gly) (interchain with G-Cter in SUMO) linkage. Lysine 125 is covalently cross-linked (Glycyl lysine isopeptide (Lys-Gly) (interchain with G-Cter in ubiquitin)).

This sequence belongs to the histone H2B family. The nucleosome is a histone octamer containing two molecules each of H2A, H2B, H3 and H4 assembled in one H3-H4 heterotetramer and two H2A-H2B heterodimers. The octamer wraps approximately 147 bp of DNA. Post-translationally, monoubiquitinated by the UBC2-BRE1 complex to form H2BK123ub1. H2BK123ub1 gives a specific tag for epigenetic transcriptional activation and is also prerequisite for H3K4me and H3K79me formation. H2BK123ub1 also modulates the formation of double-strand breaks during meiosis and is a prerequisite for DNA-damage checkpoint activation. In terms of processing, phosphorylated by STE20 to form H2BS10ph during progression through meiotic prophase. May be correlated with chromosome condensation. Acetylated by GCN5 to form H2BK11ac and H2BK16ac. H2BK16ac can also be formed by ESA1. Acetylation of N-terminal lysines and particularly formation of H2BK11acK16ac has a positive effect on transcription. Post-translationally, sumoylation to form H2BK6su and probably also H2BK16su or H2BK17su, occurs preferentially near the telomeres and represses gene transcription.

It localises to the nucleus. Its subcellular location is the chromosome. Core component of nucleosome. Nucleosomes wrap and compact DNA into chromatin, limiting DNA accessibility to the cellular machineries which require DNA as a template. Histones thereby play a central role in transcription regulation, DNA repair, DNA replication and chromosomal stability. DNA accessibility is regulated via a complex set of post-translational modifications of histones, also called histone code, and nucleosome remodeling. This is Histone H2B.1 (HTB1) from Kluyveromyces lactis (strain ATCC 8585 / CBS 2359 / DSM 70799 / NBRC 1267 / NRRL Y-1140 / WM37) (Yeast).